A 65-amino-acid chain; its full sequence is U11-theraphotoxin-Cg1b (65 aa).

Residues 1–21 (MKTTILVVILGLTLLFALSAA) form the signal peptide. Positions 22 to 29 (TELKDEER) are excised as a propeptide. Disulfide bonds link Cys-31-Cys-45, Cys-38-Cys-50, and Cys-44-Cys-57.

This sequence belongs to the neurotoxin 10 (Hwtx-1) family. 32 (Jztx-16) subfamily. As to expression, expressed by the venom gland.

It is found in the secreted. In terms of biological role, probable ion channel inhibitor. The protein is U11-theraphotoxin-Cg1b of Chilobrachys guangxiensis (Chinese earth tiger tarantula).